An 837-amino-acid polypeptide reads, in one-letter code: Ribosome-releasing factor 2, mitochondrial (837 aa).

A mitochondrion-targeting transit peptide spans Met-1–Leu-29. A tr-type G domain is found at Leu-40–Leu-331. Residues Ala-49–Thr-56, Asp-113–His-117, and Asn-167–Asp-170 each bind GTP. The tract at residues Ile-338–Ser-359 is disordered. The span at Val-345–Ser-355 shows a compositional bias: basic residues.

This sequence belongs to the TRAFAC class translation factor GTPase superfamily. Classic translation factor GTPase family. EF-G/EF-2 subfamily.

The protein resides in the mitochondrion. Mitochondrial GTPase that mediates the disassembly of ribosomes from messenger RNA at the termination of mitochondrial protein biosynthesis. Not involved in the GTP-dependent ribosomal translocation step during translation elongation. In Meyerozyma guilliermondii (strain ATCC 6260 / CBS 566 / DSM 6381 / JCM 1539 / NBRC 10279 / NRRL Y-324) (Yeast), this protein is Ribosome-releasing factor 2, mitochondrial.